The primary structure comprises 38 residues: Beta-defensin 8 (38 aa).

Cystine bridges form between Cys-7–Cys-36, Cys-14–Cys-29, and Cys-19–Cys-37.

The protein belongs to the beta-defensin family. In terms of tissue distribution, neutrophilic granules.

The protein localises to the secreted. Its function is as follows. Has bactericidal activity. Active against E.coli ML35 and S.aureus 502A. This chain is Beta-defensin 8 (DEFB8), found in Bos taurus (Bovine).